We begin with the raw amino-acid sequence, 485 residues long: uncharacterized protein (485 aa).

The next 11 membrane-spanning stretches (helical) occupy residues 79–99, 117–137, 139–159, 170–190, 199–219, 275–295, 313–333, 355–375, 380–400, 421–441, and 448–468; these read LVTLGATLYTLGILFGNLIFA, VFALLQIPIALSVNLAMFLVF, FFSGLFGSVGLSNGSGSLADL, VIYFTVLSIGPGIAPIISGFI, WEFWILLILSGFNLFWAFLLL, ILICVACTIGSIYGMINLVLI, GLMYISITLGLFSAVFIAMPI, LPMGFIGITLFEIGILLFGWT, IFWFVPTIGSAIMGGGYIMTS, GVKIFQLLLGAIFPLFAESLF, and WGCTLLAFILLACGCSLPILF.

Belongs to the major facilitator superfamily. CAR1 family.

It is found in the golgi apparatus. The protein localises to the membrane. This is an uncharacterized protein from Schizosaccharomyces pombe (strain 972 / ATCC 24843) (Fission yeast).